The sequence spans 93 residues: MVFGSAASEKTPEEILKGVALMLDEIINDTTVPRNIRAAAEKAKEAVLKEGEEPIVRSATAIHILDEISNDPNMPLHTRTQIWSIVSELERVK.

It belongs to the UPF0147 family.

This is UPF0147 protein MJ1419 from Methanocaldococcus jannaschii (strain ATCC 43067 / DSM 2661 / JAL-1 / JCM 10045 / NBRC 100440) (Methanococcus jannaschii).